A 272-amino-acid chain; its full sequence is MSGFEQLFAGKLPKLVMFDLDGTLVDSVPDLAVAVDTMLAELGRPIAGLESVRAWVGNGAPVLVRRALANHLDHSGVDDELAEQGLEIFMRAYAQKHEFTVVYPGVRETLKWLQKMGVEMALITNKPERFVAPLLDEMKLGRFFRWIIGGDTMPQKKPDPAALFFVMKMAGVPASQALFVGDSRSDVQAAKAAGVACVALSYGYNHGRPIAEENPAMVIDDLRKLIPGCLDMDAEILLPDINSPSSRESIVVVTRKLWMKVIKALARWRWRA.

Asp-19 (nucleophile) is an active-site residue. 3 residues coordinate Mg(2+): Asp-19, Asp-21, and Asp-182.

It belongs to the HAD-like hydrolase superfamily. CbbY/CbbZ/Gph/YieH family. The cofactor is Mg(2+).

The enzyme catalyses 2-phosphoglycolate + H2O = glycolate + phosphate. It participates in organic acid metabolism; glycolate biosynthesis; glycolate from 2-phosphoglycolate: step 1/1. In terms of biological role, specifically catalyzes the dephosphorylation of 2-phosphoglycolate. Is involved in the dissimilation of the intracellular 2-phosphoglycolate formed during the DNA repair of 3'-phosphoglycolate ends, a major class of DNA lesions induced by oxidative stress. This chain is Phosphoglycolate phosphatase, found in Pseudomonas savastanoi pv. phaseolicola (strain 1448A / Race 6) (Pseudomonas syringae pv. phaseolicola (strain 1448A / Race 6)).